Consider the following 55-residue polypeptide: Large ribosomal subunit protein bL33 (55 aa).

This sequence belongs to the bacterial ribosomal protein bL33 family.

The sequence is that of Large ribosomal subunit protein bL33 from Maricaulis maris (strain MCS10) (Caulobacter maris).